The sequence spans 306 residues: tRNA pseudouridine synthase B (306 aa).

The active-site Nucleophile is the Asp-48.

Belongs to the pseudouridine synthase TruB family. Type 1 subfamily.

The catalysed reaction is uridine(55) in tRNA = pseudouridine(55) in tRNA. Functionally, responsible for synthesis of pseudouridine from uracil-55 in the psi GC loop of transfer RNAs. In Chromobacterium violaceum (strain ATCC 12472 / DSM 30191 / JCM 1249 / CCUG 213 / NBRC 12614 / NCIMB 9131 / NCTC 9757 / MK), this protein is tRNA pseudouridine synthase B.